Here is a 198-residue protein sequence, read N- to C-terminus: Ribosome maturation factor RimP (198 aa).

This sequence belongs to the RimP family.

It localises to the cytoplasm. Its function is as follows. Required for maturation of 30S ribosomal subunits. The chain is Ribosome maturation factor RimP from Agrobacterium fabrum (strain C58 / ATCC 33970) (Agrobacterium tumefaciens (strain C58)).